The sequence spans 498 residues: ADP,ATP carrier protein 1 (498 aa).

The Cytoplasmic segment spans residues 1-33; it reads MNNPKNDNYLSELSKVIWPIERYENKKFLPMAF. The helical transmembrane segment at 34 to 54 threads the bilayer; the sequence is MMFCILLNYSTLRSIKDGFVV. Residues Cys-37 and Cys-85 are joined by a disulfide bond. Over 55-67 the chain is Extracellular; that stretch reads TDIGAEAISFLKT. The chain crosses the membrane as a helical span at residues 68–88; it reads YIVLPSAVIAMVIYVKLCDIL. Over 89–92 the chain is Cytoplasmic; the sequence is KQEN. A helical membrane pass occupies residues 93–113; sequence VFYVITSFFLGYFALFAFVLY. At 114–147 the chain is on the extracellular side; it reads PYPDLVHPDPETIESWSVAYPNVKWFIRIVGKWS. A helical membrane pass occupies residues 148-168; that stretch reads FASFYTMAELWGTMMLSLLFW. Residues 169–184 are Cytoplasmic-facing; the sequence is QFANQITKTDEAKRFY. Residues 185-205 form a helical membrane-spanning segment; it reads SMFGLLANLALPVTSVIIGYC. Residues 206–218 are Extracellular-facing; that stretch reads LHEKTQIVAEHLK. Residues 219–239 traverse the membrane as a helical segment; the sequence is FVPLFVIMITSSFLVILTYRW. The Cytoplasmic portion of the chain corresponds to 240-279; the sequence is MNKNVLTDPRLYDPALVKEKKAKAKMSLIDSFKMIFTSKY. Residues 280-300 form a helical membrane-spanning segment; that stretch reads VGYIALLLIAYGVSVNLVEGV. Residues 301–320 lie on the Extracellular side of the membrane; it reads WKSKVKELYPTKEAYTIYMG. The chain crosses the membrane as a helical span at residues 321 to 341; the sequence is KFQFYQGWVAIAFMLIGSNIL. Over 342 to 348 the chain is Cytoplasmic; that stretch reads RKVSWLT. A helical transmembrane segment spans residues 349 to 369; sequence AAMITPLMMLITGAAFFAFIF. The Extracellular portion of the chain corresponds to 370–379; sequence FDSVIAMHLT. Residues 380–400 traverse the membrane as a helical segment; it reads GILASGPLALAVMIGMIQNVL. Over 401 to 438 the chain is Cytoplasmic; it reads SKGVKYSLFDATKNMAYIPLDKDLRVKGQAAVEVIGGR. 436-442 is an ATP binding site; it reads GGRFGKS. A helical transmembrane segment spans residues 439–459; the sequence is FGKSGGAIIQSTFFILFPAFG. Residues 460-465 are Extracellular-facing; sequence FVEATP. A helical transmembrane segment spans residues 466–486; it reads YFASIFFVIVILWIYAVKGLN. Over 487–498 the chain is Cytoplasmic; sequence KEYKVLVNKTEK.

The protein belongs to the ADP/ATP translocase tlc family.

The protein localises to the cell membrane. Functionally, provides the rickettsial cell with host ATP in exchange for rickettsial ADP. This is an obligate exchange system. This energy acquiring activity is an important component of rickettsial parasitism. This Rickettsia conorii (strain ATCC VR-613 / Malish 7) protein is ADP,ATP carrier protein 1 (tlcA).